The primary structure comprises 294 residues: Probable 2-(5''-triphosphoribosyl)-3'-dephosphocoenzyme-A synthase (294 aa).

This sequence belongs to the CitG/MdcB family.

It carries out the reaction 3'-dephospho-CoA + ATP = 2'-(5''-triphospho-alpha-D-ribosyl)-3'-dephospho-CoA + adenine. This Streptococcus pyogenes serotype M5 (strain Manfredo) protein is Probable 2-(5''-triphosphoribosyl)-3'-dephosphocoenzyme-A synthase.